The sequence spans 86 residues: Cell division topological specificity factor (86 aa).

It belongs to the MinE family.

Prevents the cell division inhibition by proteins MinC and MinD at internal division sites while permitting inhibition at polar sites. This ensures cell division at the proper site by restricting the formation of a division septum at the midpoint of the long axis of the cell. This is Cell division topological specificity factor from Shewanella halifaxensis (strain HAW-EB4).